The primary structure comprises 396 residues: Ribosomal RNA large subunit methyltransferase I (396 aa).

The PUA domain occupies 2 to 81; that stretch reads TVSIYLAKGR…EAIDKDFFVR (80 aa).

This sequence belongs to the methyltransferase superfamily. RlmI family.

Its subcellular location is the cytoplasm. The catalysed reaction is cytidine(1962) in 23S rRNA + S-adenosyl-L-methionine = 5-methylcytidine(1962) in 23S rRNA + S-adenosyl-L-homocysteine + H(+). In terms of biological role, specifically methylates the cytosine at position 1962 (m5C1962) of 23S rRNA. The protein is Ribosomal RNA large subunit methyltransferase I of Aliivibrio fischeri (strain MJ11) (Vibrio fischeri).